Reading from the N-terminus, the 118-residue chain is Ribonuclease P protein component (118 aa).

Belongs to the RnpA family. Consists of a catalytic RNA component (M1 or rnpB) and a protein subunit.

It carries out the reaction Endonucleolytic cleavage of RNA, removing 5'-extranucleotides from tRNA precursor.. RNaseP catalyzes the removal of the 5'-leader sequence from pre-tRNA to produce the mature 5'-terminus. It can also cleave other RNA substrates such as 4.5S RNA. The protein component plays an auxiliary but essential role in vivo by binding to the 5'-leader sequence and broadening the substrate specificity of the ribozyme. This chain is Ribonuclease P protein component, found in Rickettsia conorii (strain ATCC VR-613 / Malish 7).